The following is a 721-amino-acid chain: Protein mu-NS (721 aa).

The segment at methionine 1–proline 13 is interaction with sigma-NS. The RNA-binding stretch occupies residues methionine 1 to proline 38. Positions valine 14–aspartate 40 are interaction with mu-2. The tract at residues threonine 17–serine 37 is disordered. The involved in the formation of factory-like inclusions stretch occupies residues glutamine 471–leucine 721. Coiled-coil stretches lie at residues leucine 523–lysine 556 and lysine 632–glutamine 686.

It belongs to the orthoreovirus mu-NS protein family. Interacts with mu-2. Interacts with sigma-NS; in viral factories. Interacts with the inner capsid proteins lambda-1 and sigma-2, and outer capsid protein lambda-2; in viral factories. The N-terminus is blocked.

Its subcellular location is the host cytoplasm. In terms of biological role, non-structural protein implicated with protein sigma-NS in forming the matrix of viral factories, which are large inclusions in the host cytoplasm where replication intermediates are assembled and viral RNA replication takes place. Together with mu-2, recruits the other core proteins to these factories. This chain is Protein mu-NS (M3), found in Mammalia (T2J).